Consider the following 137-residue polypeptide: 6,7-dimethyl-8-ribityllumazine synthase (137 aa).

5-amino-6-(D-ribitylamino)uracil contacts are provided by residues phenylalanine 11, serine 43 to aspartate 45, and cysteine 67 to isoleucine 69. Aspartate 72–threonine 73 is a (2S)-2-hydroxy-3-oxobutyl phosphate binding site. Residue histidine 75 is the Proton donor of the active site. Residue leucine 100 participates in 5-amino-6-(D-ribitylamino)uracil binding. Residue arginine 115 participates in (2S)-2-hydroxy-3-oxobutyl phosphate binding.

This sequence belongs to the DMRL synthase family. In terms of assembly, forms an icosahedral capsid composed of 60 subunits, arranged as a dodecamer of pentamers.

The catalysed reaction is (2S)-2-hydroxy-3-oxobutyl phosphate + 5-amino-6-(D-ribitylamino)uracil = 6,7-dimethyl-8-(1-D-ribityl)lumazine + phosphate + 2 H2O + H(+). It participates in cofactor biosynthesis; riboflavin biosynthesis; riboflavin from 2-hydroxy-3-oxobutyl phosphate and 5-amino-6-(D-ribitylamino)uracil: step 1/2. Functionally, catalyzes the formation of 6,7-dimethyl-8-ribityllumazine by condensation of 5-amino-6-(D-ribitylamino)uracil with 3,4-dihydroxy-2-butanone 4-phosphate. This is the penultimate step in the biosynthesis of riboflavin. The polypeptide is 6,7-dimethyl-8-ribityllumazine synthase (Methanococcus maripaludis (strain DSM 14266 / JCM 13030 / NBRC 101832 / S2 / LL)).